A 391-amino-acid polypeptide reads, in one-letter code: 4-hydroxy-3-methylbut-2-en-1-yl diphosphate synthase (flavodoxin) (391 aa).

[4Fe-4S] cluster is bound by residues Cys-286, Cys-289, Cys-321, and Glu-328.

The protein belongs to the IspG family. [4Fe-4S] cluster serves as cofactor.

The enzyme catalyses (2E)-4-hydroxy-3-methylbut-2-enyl diphosphate + oxidized [flavodoxin] + H2O + 2 H(+) = 2-C-methyl-D-erythritol 2,4-cyclic diphosphate + reduced [flavodoxin]. The protein operates within isoprenoid biosynthesis; isopentenyl diphosphate biosynthesis via DXP pathway; isopentenyl diphosphate from 1-deoxy-D-xylulose 5-phosphate: step 5/6. In terms of biological role, converts 2C-methyl-D-erythritol 2,4-cyclodiphosphate (ME-2,4cPP) into 1-hydroxy-2-methyl-2-(E)-butenyl 4-diphosphate. The polypeptide is 4-hydroxy-3-methylbut-2-en-1-yl diphosphate synthase (flavodoxin) (Corynebacterium diphtheriae (strain ATCC 700971 / NCTC 13129 / Biotype gravis)).